We begin with the raw amino-acid sequence, 613 residues long: Dihydroxy-acid dehydratase (613 aa).

Asp81 contacts Mg(2+). Cys122 is a binding site for [2Fe-2S] cluster. The Mg(2+) site is built by Asp123 and Lys124. Residue Lys124 is modified to N6-carboxylysine. Residue Cys195 participates in [2Fe-2S] cluster binding. Glu491 provides a ligand contact to Mg(2+). Ser517 acts as the Proton acceptor in catalysis.

Belongs to the IlvD/Edd family. Homodimer. [2Fe-2S] cluster serves as cofactor. It depends on Mg(2+) as a cofactor.

The enzyme catalyses (2R)-2,3-dihydroxy-3-methylbutanoate = 3-methyl-2-oxobutanoate + H2O. It catalyses the reaction (2R,3R)-2,3-dihydroxy-3-methylpentanoate = (S)-3-methyl-2-oxopentanoate + H2O. The protein operates within amino-acid biosynthesis; L-isoleucine biosynthesis; L-isoleucine from 2-oxobutanoate: step 3/4. Its pathway is amino-acid biosynthesis; L-valine biosynthesis; L-valine from pyruvate: step 3/4. Functionally, functions in the biosynthesis of branched-chain amino acids. Catalyzes the dehydration of (2R,3R)-2,3-dihydroxy-3-methylpentanoate (2,3-dihydroxy-3-methylvalerate) into 2-oxo-3-methylpentanoate (2-oxo-3-methylvalerate) and of (2R)-2,3-dihydroxy-3-methylbutanoate (2,3-dihydroxyisovalerate) into 2-oxo-3-methylbutanoate (2-oxoisovalerate), the penultimate precursor to L-isoleucine and L-valine, respectively. This is Dihydroxy-acid dehydratase from Vibrio vulnificus (strain CMCP6).